The chain runs to 100 residues: Urease subunit gamma (100 aa).

The protein belongs to the urease gamma subunit family. Heterotrimer of UreA (gamma), UreB (beta) and UreC (alpha) subunits. Three heterotrimers associate to form the active enzyme.

Its subcellular location is the cytoplasm. The enzyme catalyses urea + 2 H2O + H(+) = hydrogencarbonate + 2 NH4(+). It functions in the pathway nitrogen metabolism; urea degradation; CO(2) and NH(3) from urea (urease route): step 1/1. This Ruegeria pomeroyi (strain ATCC 700808 / DSM 15171 / DSS-3) (Silicibacter pomeroyi) protein is Urease subunit gamma.